The following is a 56-amino-acid chain: Small ribosomal subunit protein uS14 (56 aa).

Zn(2+) is bound by residues C21, C24, C39, and C42.

The protein belongs to the universal ribosomal protein uS14 family. In terms of assembly, component of the 40S small ribosomal subunit. Zn(2+) is required as a cofactor.

It is found in the cytoplasm. The protein localises to the cytosol. Its subcellular location is the rough endoplasmic reticulum. In Bombyx mori (Silk moth), this protein is Small ribosomal subunit protein uS14 (RpS29).